The chain runs to 246 residues: Acetoacetate decarboxylase (246 aa).

Lys-116 functions as the Schiff-base intermediate with acetoacetate in the catalytic mechanism.

The protein belongs to the ADC family.

The enzyme catalyses acetoacetate + H(+) = acetone + CO2. Functionally, catalyzes the conversion of acetoacetate to acetone and carbon dioxide. The protein is Acetoacetate decarboxylase of Burkholderia vietnamiensis (strain G4 / LMG 22486) (Burkholderia cepacia (strain R1808)).